We begin with the raw amino-acid sequence, 128 residues long: NADH-ubiquinone oxidoreductase chain 3 (128 aa).

Transmembrane regions (helical) follow at residues 3–23 (TIYT…NYLI), 52–72 (VAFI…SSIL), and 84–104 (YGLS…VYEI).

Belongs to the complex I subunit 3 family.

Its subcellular location is the mitochondrion membrane. The enzyme catalyses a ubiquinone + NADH + 5 H(+)(in) = a ubiquinol + NAD(+) + 4 H(+)(out). Core subunit of the mitochondrial membrane respiratory chain NADH dehydrogenase (Complex I) that is believed to belong to the minimal assembly required for catalysis. Complex I functions in the transfer of electrons from NADH to the respiratory chain. The immediate electron acceptor for the enzyme is believed to be ubiquinone. The chain is NADH-ubiquinone oxidoreductase chain 3 (ND3) from Debaryomyces hansenii (strain ATCC 36239 / CBS 767 / BCRC 21394 / JCM 1990 / NBRC 0083 / IGC 2968) (Yeast).